A 115-amino-acid chain; its full sequence is Vitelline membrane protein Vm32E (115 aa).

The N-terminal stretch at Met-1 to Ala-17 is a signal peptide. The 38-residue stretch at Gly-35–Thr-72 folds into the VM domain.

It belongs to the vitelline membrane family.

The protein localises to the secreted. In terms of biological role, major early eggshell protein. The sequence is that of Vitelline membrane protein Vm32E from Drosophila yakuba (Fruit fly).